We begin with the raw amino-acid sequence, 318 residues long: Pantothenate kinase (318 aa).

Residue 96 to 103 participates in ATP binding; sequence GSVAVGKS.

This sequence belongs to the prokaryotic pantothenate kinase family.

It is found in the cytoplasm. The enzyme catalyses (R)-pantothenate + ATP = (R)-4'-phosphopantothenate + ADP + H(+). Its pathway is cofactor biosynthesis; coenzyme A biosynthesis; CoA from (R)-pantothenate: step 1/5. The protein is Pantothenate kinase of Rhodopseudomonas palustris (strain ATCC BAA-98 / CGA009).